Here is a 174-residue protein sequence, read N- to C-terminus: uncharacterized protein (174 aa).

The disordered stretch occupies residues 138–174 (VNLTSKSSGRSDEEGTTRRAPVLKTRADFVSRKDKHR). Residues 162-174 (TRADFVSRKDKHR) show a composition bias toward basic and acidic residues.

This is an uncharacterized protein from Bos taurus (Bovine).